Reading from the N-terminus, the 226-residue chain is Glutathione peroxidase 3 (226 aa).

Residues 1–24 (MARLLQASCLLSLLLAGFLPQSRG) form the signal peptide. U73 is a catalytic residue. Position 73 (U73) is a non-standard amino acid, selenocysteine.

This sequence belongs to the glutathione peroxidase family. In terms of assembly, homotetramer. In terms of tissue distribution, expressed intensively in the kidney and adrenal gland, and weakly in the cerebellum, heart, and lung. Secreted in plasma.

It is found in the secreted. It carries out the reaction 2 glutathione + H2O2 = glutathione disulfide + 2 H2O. The catalysed reaction is tert-butyl hydroperoxide + 2 glutathione = tert-butanol + glutathione disulfide + H2O. Its function is as follows. Protects cells and enzymes from oxidative damage, by catalyzing the reduction of hydrogen peroxide, lipid peroxides and organic hydroperoxide, by glutathione. This is Glutathione peroxidase 3 from Macaca fuscata fuscata (Japanese macaque).